Consider the following 379-residue polypeptide: NADH-rubredoxin oxidoreductase (379 aa).

Disulfide bonds link C26–C286 and C137–C216. FAD is bound by residues 33 to 35 (NSE), R42, A79, and Y125. D259 contacts FAD.

It belongs to the FAD-dependent oxidoreductase family. In terms of assembly, monomer. FAD is required as a cofactor.

The catalysed reaction is 2 reduced [rubredoxin] + NAD(+) + H(+) = 2 oxidized [rubredoxin] + NADH. In terms of biological role, catalyzes the NADH-dependent reduction of rubredoxin (Rd). NADPH is a very poor electron donor compared to NADH. Functions as an intermediate component in the electron transfer chain: NADH-&gt;NROR-&gt;Rd-&gt;FprA1/2. Also functions as an intermediate component in the electron transfer chains from NADH to revRbr and Dfx. Therefore, is a key electron carrier in an efficient multienzyme complex that can scavenge O(2) and reactive oxygen species (ROS), and thus plays an important role in the oxidative stress defense system in C.acetobutylicum, an obligate anaerobic bacterium. The protein is NADH-rubredoxin oxidoreductase (nroR) of Clostridium acetobutylicum (strain ATCC 824 / DSM 792 / JCM 1419 / IAM 19013 / LMG 5710 / NBRC 13948 / NRRL B-527 / VKM B-1787 / 2291 / W).